Here is a 642-residue protein sequence, read N- to C-terminus: Threonine--tRNA ligase (642 aa).

The region spanning M1–T61 is the TGS domain. The segment at D243–P534 is catalytic. C334, H385, and H511 together coordinate Zn(2+).

It belongs to the class-II aminoacyl-tRNA synthetase family. In terms of assembly, homodimer. It depends on Zn(2+) as a cofactor.

The protein resides in the cytoplasm. It carries out the reaction tRNA(Thr) + L-threonine + ATP = L-threonyl-tRNA(Thr) + AMP + diphosphate + H(+). Its function is as follows. Catalyzes the attachment of threonine to tRNA(Thr) in a two-step reaction: L-threonine is first activated by ATP to form Thr-AMP and then transferred to the acceptor end of tRNA(Thr). Also edits incorrectly charged L-seryl-tRNA(Thr). This Shewanella amazonensis (strain ATCC BAA-1098 / SB2B) protein is Threonine--tRNA ligase.